The following is a 300-amino-acid chain: Tyrosine phosphatase-like protein J1 (300 aa).

One can recognise a Tyrosine-protein phosphatase domain in the interval leucine 27–phenylalanine 294.

Belongs to the protein-tyrosine phosphatase family.

The sequence is that of Tyrosine phosphatase-like protein J1 (J1) from Microplitis demolitor (Parasitoid wasp).